The primary structure comprises 289 residues: Tumor necrosis factor receptor superfamily member 5 (289 aa).

The first 19 residues, 1 to 19 (MVSLPRLCALWGCLLTAVH), serve as a signal peptide directing secretion. The Extracellular segment spans residues 20–193 (LGQCVTCSDK…VICGLKSRMR (174 aa)). TNFR-Cys repeat units follow at residues 25–60 (TCSDKQYLHDGQCCDLCQPGSRLTSHCTALEKTQCH), 61–103 (PCDS…DTVC), 104–144 (TCKE…TVCH), and 145–187 (PCPV…VICG). 8 disulfide bridges follow: C26–C37, C38–C51, C41–C59, C62–C77, C83–C103, C105–C119, C111–C116, and C125–C143. N-linked (GlcNAc...) asparagine glycosylation occurs at N153. Residues 194 to 215 (ALLVIPVVMGILITIFGVFLYI) form a helical membrane-spanning segment. The Cytoplasmic portion of the chain corresponds to 216–289 (KKVVKKPKDN…TDSIALRPLV (74 aa)). The interval 228–251 (LPPAARRQDPQEMEDYPGHNTAAP) is disordered.

Monomer and homodimer. Interacts with TRAF1, TRAF2 and TRAF6. Interacts with TRAF3 and TRAF5. Interacts with TRAF6 and MAP3K8; the interaction is required for ERK activation.

Its subcellular location is the cell membrane. The protein localises to the secreted. Receptor for TNFSF5/CD40LG. Transduces TRAF6- and MAP3K8-mediated signals that activate ERK in macrophages and B cells, leading to induction of immunoglobulin secretion. This chain is Tumor necrosis factor receptor superfamily member 5 (Cd40), found in Mus musculus (Mouse).